Here is an 87-residue protein sequence, read N- to C-terminus: Large ribosomal subunit protein eL33 (87 aa).

This sequence belongs to the eukaryotic ribosomal protein eL33 family.

This chain is Large ribosomal subunit protein eL33, found in Pyrococcus abyssi (strain GE5 / Orsay).